Here is a 209-residue protein sequence, read N- to C-terminus: Ribosomal RNA large subunit methyltransferase E (209 aa).

The S-adenosyl-L-methionine site is built by Gly63, Trp65, Asp83, Asp99, and Asp124. The Proton acceptor role is filled by Lys164.

This sequence belongs to the class I-like SAM-binding methyltransferase superfamily. RNA methyltransferase RlmE family.

It is found in the cytoplasm. The enzyme catalyses uridine(2552) in 23S rRNA + S-adenosyl-L-methionine = 2'-O-methyluridine(2552) in 23S rRNA + S-adenosyl-L-homocysteine + H(+). Its function is as follows. Specifically methylates the uridine in position 2552 of 23S rRNA at the 2'-O position of the ribose in the fully assembled 50S ribosomal subunit. In Shewanella amazonensis (strain ATCC BAA-1098 / SB2B), this protein is Ribosomal RNA large subunit methyltransferase E.